Reading from the N-terminus, the 148-residue chain is Hemoglobin subunit beta-4 (148 aa).

Positions 3–148 constitute a Globin domain; that stretch reads DWTDPERSAI…VVSALGRQYH (146 aa). Residues His-64 and His-93 each contribute to the heme b site.

The protein belongs to the globin family. In terms of assembly, heterotetramer of two alpha chains and two beta chains. Red blood cells.

Its function is as follows. Involved in oxygen transport from gills to the various peripheral tissues. This chain is Hemoglobin subunit beta-4 (hbb4), found in Oncorhynchus mykiss (Rainbow trout).